The chain runs to 900 residues: Trehalose-phosphatase (900 aa).

Disordered regions lie at residues 76–109 (SRLF…EEDP) and 874–900 (VKHS…SYKN). Residues 82-108 (KNRDKSENGEKGENDLHAKEEREKEED) are compositionally biased toward basic and acidic residues.

In the C-terminal section; belongs to the trehalose phosphatase family. The protein in the N-terminal section; belongs to the glycosyltransferase 20 family. The cofactor is Mg(2+).

The enzyme catalyses alpha,alpha-trehalose 6-phosphate + H2O = alpha,alpha-trehalose + phosphate. It functions in the pathway carbohydrate biosynthesis. In terms of biological role, phosphatase catalytic subunit of the trehalose synthase complex that catalyzes the production of trehalose from glucose-6-phosphate and UDP-alpha-D-glucose in a two step process. In Zygosaccharomyces rouxii, this protein is Trehalose-phosphatase.